Consider the following 836-residue polypeptide: Eukaryotic translation initiation factor 3 subunit C (836 aa).

The disordered stretch occupies residues 1 to 97; that stretch reads MSRFFVSGYD…RRVVKSAKEK (97 aa). Residues 13-55 are compositionally biased toward acidic residues; that stretch reads SSSEEEDLLTSSEEELMSSEQESDSEFDDEFANDDDSDSSDSD. Basic and acidic residues predominate over residues 86–97; the sequence is EGRRVVKSAKEK. The region spanning 586 to 761 is the PCI domain; sequence FHMHINLELL…KSINFVSSEH (176 aa). A disordered region spans residues 783–817; sequence DKNEKTASNGHGRKTTQQQQQQQQKEQREQTHDEN. A compositionally biased stretch (low complexity) spans 797 to 806; sequence TTQQQQQQQQ. Basic and acidic residues predominate over residues 807–817; that stretch reads KEQREQTHDEN.

The protein belongs to the eIF-3 subunit C family. In terms of assembly, component of the eukaryotic translation initiation factor 3 (eIF-3) complex.

It is found in the cytoplasm. Functionally, component of the eukaryotic translation initiation factor 3 (eIF-3) complex, which is involved in protein synthesis of a specialized repertoire of mRNAs and, together with other initiation factors, stimulates binding of mRNA and methionyl-tRNAi to the 40S ribosome. The eIF-3 complex specifically targets and initiates translation of a subset of mRNAs involved in cell proliferation. This is Eukaryotic translation initiation factor 3 subunit C from Meyerozyma guilliermondii (strain ATCC 6260 / CBS 566 / DSM 6381 / JCM 1539 / NBRC 10279 / NRRL Y-324) (Yeast).